We begin with the raw amino-acid sequence, 154 residues long: 3-hydroxyacyl-[acyl-carrier-protein] dehydratase FabZ (154 aa).

Residue His-54 is part of the active site.

It belongs to the thioester dehydratase family. FabZ subfamily.

It localises to the cytoplasm. It catalyses the reaction a (3R)-hydroxyacyl-[ACP] = a (2E)-enoyl-[ACP] + H2O. In terms of biological role, involved in unsaturated fatty acids biosynthesis. Catalyzes the dehydration of short chain beta-hydroxyacyl-ACPs and long chain saturated and unsaturated beta-hydroxyacyl-ACPs. This Shewanella sp. (strain MR-4) protein is 3-hydroxyacyl-[acyl-carrier-protein] dehydratase FabZ.